The primary structure comprises 210 residues: MTNLNYQQTHFVMSAPDIRHLPSDTGIEVAFAGRSNAGKSSALNTLTNQKSLARTSKTPGRTQLINLFEVADGKRLVDLPGYGYAEVPEEMKRKWQRALGEYLEKRQSLQGLVVLMDIRHPLKDLDQQMIEWAVDSNIAVLVLLTKADKLASGARKAQLNMVREAVLAFNGDVQVETFSSLKKQGVDKLRQKLDTWFSEMQPVEETQDGE.

One can recognise an EngB-type G domain in the interval 25-199; it reads TGIEVAFAGR…RQKLDTWFSE (175 aa). Residues 33 to 40, 60 to 64, 78 to 81, 145 to 148, and 178 to 180 contribute to the GTP site; these read GRSNAGKS, GRTQL, DLPG, TKAD, and FSS. Serine 40 and threonine 62 together coordinate Mg(2+).

It belongs to the TRAFAC class TrmE-Era-EngA-EngB-Septin-like GTPase superfamily. EngB GTPase family. It depends on Mg(2+) as a cofactor.

Its function is as follows. Necessary for normal cell division and for the maintenance of normal septation. This chain is Probable GTP-binding protein EngB, found in Escherichia coli O6:H1 (strain CFT073 / ATCC 700928 / UPEC).